Consider the following 687-residue polypeptide: CWF19-like protein 2 homolog (687 aa).

The stretch at 6–51 (FESGREKDKARQELREAREAMLQQAKERAELRGQRERQKELRGEAD) forms a coiled coil. The segment covering 24-50 (EAMLQQAKERAELRGQRERQKELRGEA) has biased composition (basic and acidic residues). A disordered region spans residues 24 to 281 (EAMLQQAKER…PKSRPSCLTD (258 aa)). Basic residues predominate over residues 66 to 92 (KKSKKNVSKHKSRSKSKSSKKSRKHRN). Residues 93-107 (SSSSSESSTSSSSSF) are compositionally biased toward low complexity. A coiled-coil region spans residues 108 to 131 (SEDEKERKRRKKKSKRSRKESASE). The segment covering 114–125 (RKRRKKKSKRSR) has biased composition (basic residues). Ser128 and Ser130 each carry phosphoserine. 2 stretches are compositionally biased toward basic and acidic residues: residues 146–157 (VTKKEPPQRDDW) and 168–180 (FSRE…KPNE). A coiled-coil region spans residues 290-325 (KAIKAELKGKKELAAELNQQLEAARKERAEFIASGE). The disordered stretch occupies residues 355–383 (VRPLVQSGDPNESYGGRMGPKRGSKKVDT). The stretch at 444–475 (KQISASDAEKREMQSAIREHEKLVATLDNCER) forms a coiled coil.

It belongs to the CWF19 family.

The polypeptide is CWF19-like protein 2 homolog (Drosophila melanogaster (Fruit fly)).